A 121-amino-acid polypeptide reads, in one-letter code: Small ribosomal subunit protein uS13 (121 aa).

The interval 93 to 121 (RGLPVRGQNTKNNARTRKGKATAIAGKKK) is disordered. Basic residues predominate over residues 106–121 (ARTRKGKATAIAGKKK).

Belongs to the universal ribosomal protein uS13 family. As to quaternary structure, part of the 30S ribosomal subunit. Forms a loose heterodimer with protein S19. Forms two bridges to the 50S subunit in the 70S ribosome.

Located at the top of the head of the 30S subunit, it contacts several helices of the 16S rRNA. In the 70S ribosome it contacts the 23S rRNA (bridge B1a) and protein L5 of the 50S subunit (bridge B1b), connecting the 2 subunits; these bridges are implicated in subunit movement. Contacts the tRNAs in the A and P-sites. The polypeptide is Small ribosomal subunit protein uS13 (Streptococcus uberis (strain ATCC BAA-854 / 0140J)).